A 371-amino-acid polypeptide reads, in one-letter code: Cytochrome b (371 aa).

Helical transmembrane passes span Phe25–Val45, Trp69–Ile90, Trp105–Leu125, and Phe170–Ile190. The heme b site is built by His75 and His89. The heme b site is built by His174 and His188. His193 is a binding site for a ubiquinone. Helical transmembrane passes span Tyr218 to Phe238, Leu280 to His300, Leu312 to Thr332, and Tyr339 to Pro358.

This sequence belongs to the cytochrome b family. In terms of assembly, the cytochrome bc1 complex contains 3 respiratory subunits (MT-CYB, CYC1 and UQCRFS1), 2 core proteins (UQCRC1 and UQCRC2) and probably 6 low-molecular weight proteins. It depends on heme b as a cofactor.

Its subcellular location is the mitochondrion inner membrane. Functionally, component of the ubiquinol-cytochrome c reductase complex (complex III or cytochrome b-c1 complex) that is part of the mitochondrial respiratory chain. The b-c1 complex mediates electron transfer from ubiquinol to cytochrome c. Contributes to the generation of a proton gradient across the mitochondrial membrane that is then used for ATP synthesis. This Simalia amethistina (Amethystine python) protein is Cytochrome b (MT-CYB).